A 317-amino-acid polypeptide reads, in one-letter code: Ciliary microtubule inner protein 2A (317 aa).

The segment at 131–153 (TPDTPHPPCPPGRKGDSRDLGHP) is disordered.

This sequence belongs to the CIMIP2 family. Microtubule inner protein component of sperm flagellar doublet microtubules.

The protein localises to the cytoplasm. Its subcellular location is the cytoskeleton. The protein resides in the flagellum axoneme. In terms of biological role, microtubule inner protein (MIP) part of the dynein-decorated doublet microtubules (DMTs) in flagellum axoneme. Binds to the intra-tubulin interfaces. The sequence is that of Ciliary microtubule inner protein 2A from Homo sapiens (Human).